The primary structure comprises 519 residues: Glutamate--cysteine ligase (519 aa).

The protein belongs to the glutamate--cysteine ligase type 1 family. Type 1 subfamily.

The enzyme catalyses L-cysteine + L-glutamate + ATP = gamma-L-glutamyl-L-cysteine + ADP + phosphate + H(+). It functions in the pathway sulfur metabolism; glutathione biosynthesis; glutathione from L-cysteine and L-glutamate: step 1/2. This Yersinia enterocolitica serotype O:8 / biotype 1B (strain NCTC 13174 / 8081) protein is Glutamate--cysteine ligase.